The following is a 186-amino-acid chain: Ribosome-recycling factor (186 aa).

Belongs to the RRF family.

It localises to the cytoplasm. Responsible for the release of ribosomes from messenger RNA at the termination of protein biosynthesis. May increase the efficiency of translation by recycling ribosomes from one round of translation to another. The sequence is that of Ribosome-recycling factor from Bartonella quintana (strain Toulouse) (Rochalimaea quintana).